The primary structure comprises 165 residues: Deoxyuridine 5'-triphosphate nucleotidohydrolase (165 aa).

Substrate is bound by residues 66–68, asparagine 79, 83–85, and lysine 93; these read RSG and TVD. The segment at 134–165 is disordered; sequence ETSRGAGGHGSSGGHASLTPGARSAARVAQEG.

This sequence belongs to the dUTPase family. Requires Mg(2+) as cofactor.

The enzyme catalyses dUTP + H2O = dUMP + diphosphate + H(+). The protein operates within pyrimidine metabolism; dUMP biosynthesis; dUMP from dCTP (dUTP route): step 2/2. Functionally, this enzyme is involved in nucleotide metabolism: it produces dUMP, the immediate precursor of thymidine nucleotides and it decreases the intracellular concentration of dUTP so that uracil cannot be incorporated into DNA. This is Deoxyuridine 5'-triphosphate nucleotidohydrolase from Nocardia farcinica (strain IFM 10152).